Consider the following 320-residue polypeptide: NADH-ubiquinone oxidoreductase chain 1 (320 aa).

8 helical membrane passes run 3 to 23 (LITI…VAFL), 72 to 92 (ILLI…WTPI), 103 to 123 (LGFL…LWAG), 147 to 167 (VTLG…TMQL), 174 to 194 (HIWL…STLA), 226 to 246 (FFLA…ILFI), 255 to 275 (ELFL…FLWI), and 295 to 315 (FLPL…SISG).

This sequence belongs to the complex I subunit 1 family.

It localises to the mitochondrion inner membrane. The enzyme catalyses a ubiquinone + NADH + 5 H(+)(in) = a ubiquinol + NAD(+) + 4 H(+)(out). In terms of biological role, core subunit of the mitochondrial membrane respiratory chain NADH dehydrogenase (Complex I) that is believed to belong to the minimal assembly required for catalysis. Complex I functions in the transfer of electrons from NADH to the respiratory chain. The immediate electron acceptor for the enzyme is believed to be ubiquinone. The polypeptide is NADH-ubiquinone oxidoreductase chain 1 (MT-ND1) (Varanus jobiensis (Peach throat monitor)).